A 360-amino-acid polypeptide reads, in one-letter code: Histidinol-phosphate aminotransferase (360 aa).

Lys218 is modified (N6-(pyridoxal phosphate)lysine).

Belongs to the class-II pyridoxal-phosphate-dependent aminotransferase family. Histidinol-phosphate aminotransferase subfamily. Homodimer. Requires pyridoxal 5'-phosphate as cofactor.

It catalyses the reaction L-histidinol phosphate + 2-oxoglutarate = 3-(imidazol-4-yl)-2-oxopropyl phosphate + L-glutamate. It functions in the pathway amino-acid biosynthesis; L-histidine biosynthesis; L-histidine from 5-phospho-alpha-D-ribose 1-diphosphate: step 7/9. In Chlorobium phaeobacteroides (strain DSM 266 / SMG 266 / 2430), this protein is Histidinol-phosphate aminotransferase.